Consider the following 2261-residue polypeptide: Phospholipid-transporting ATPase ABCA1 (2261 aa).

The S-palmitoyl cysteine moiety is linked to residue cysteine 3. Asparagine 14 is a glycosylation site (N-linked (GlcNAc...) asparagine). A helical membrane pass occupies residues 22 to 42; the sequence is TCQLLLEVAWPLFIFLILISV. Cysteine 23 is lipidated: S-palmitoyl cysteine. The Extracellular segment spans residues 43-639; that stretch reads RLSYPPYEQH…DIFLRVMSRS (597 aa). Residues 69-80 are annulus domain 1; that stretch reads WVQGIICNANNP. The cysteines at positions 75 and 309 are disulfide-linked. N-linked (GlcNAc...) asparagine glycans are attached at residues asparagine 98, asparagine 151, asparagine 161, asparagine 196, asparagine 244, asparagine 292, asparagine 337, and asparagine 349. The tract at residues 368–379 is annulus domain 2; that stretch reads SRIIWKALKPLL. N-linked (GlcNAc...) asparagine glycosylation is found at asparagine 400, asparagine 478, asparagine 489, and asparagine 521. The gateway domain stretch occupies residues 564 to 594; the sequence is ERTNKIKDGYWDPGPRADPFEDMRYVWGGFA. Transmembrane regions (helical) follow at residues 640–660, 683–703, 716–736, 745–765, and 777–797; these read MPLF…KGIV, FSWF…LVVI, SVVF…CFLI, LAAA…VLCV, and IFAS…FALF. A glycan (N-linked (GlcNAc...) asparagine) is linked at asparagine 820. A helical transmembrane segment spans residues 827–847; sequence MMLFDTFLYGVMTWYIEAVFP. Positions 899-1131 constitute an ABC transporter 1 domain; the sequence is VSIQNLVKVY…LGTGYYLTLV (233 aa). 933–940 contributes to the ATP binding site; that stretch reads GHNGAGKT. A helical transmembrane segment spans residues 1041 to 1057; that stretch reads LSVALAFVGGSKVVILD. At serine 1042 the chain carries Phosphoserine; by PKA. 2 S-palmitoyl cysteine lipidation sites follow: cysteine 1110 and cysteine 1111. N-linked (GlcNAc...) asparagine glycans are attached at residues asparagine 1144 and asparagine 1294. Positions 1283–1312 are disordered; it reads RPFTEDDAADPNDSDIDPESRETDLLSGMD. The segment covering 1287–1299 has biased composition (acidic residues); the sequence is EDDAADPNDSDID. A Phosphoserine modification is found at serine 1296. A helical membrane pass occupies residues 1351–1371; it reads IVLPAVFVCIALVFSLIVPPF. The Extracellular segment spans residues 1372-1656; it reads GKYPSLELQP…ALMTTSVDVL (285 aa). N-linked (GlcNAc...) asparagine glycosylation is present at asparagine 1453. Residues cysteine 1463 and cysteine 1477 are joined by a disulfide bond. Asparagine 1504 and asparagine 1637 each carry an N-linked (GlcNAc...) asparagine glycan. Helical transmembrane passes span 1657–1677, 1703–1723, 1735–1755, 1768–1788, 1802–1822, and 1852–1872; these read VSIC…VFLI, FVWD…IFIC, LPVL…LMYP, VVLT…TFVL, ILKS…LIDM, and NLFA…LIQY. One can recognise an ABC transporter 2 domain in the interval 1912–2144; the sequence is LEIKELTKIY…FGDGYTIVVR (233 aa). 1946–1953 serves as a coordination point for ATP; that stretch reads GVNGAGKS. N-linked (GlcNAc...) asparagine glycosylation is present at asparagine 2044. Serine 2054 bears the Phosphoserine; by PKA mark. N-linked (GlcNAc...) asparagine glycosylation occurs at asparagine 2238.

It belongs to the ABC transporter superfamily. ABCA family. In terms of assembly, interacts with MEGF10. May interact with APOE1; functionally associated with APOE1 in the biogenesis of HDLs. Interacts with ABCA8; this interaction potentiates cholesterol efflux. Interacts with ABCA12 and NR1H2; this interaction is required for ABCA1 localization to the cell surface and is necessary for its normal activity and stability. Phosphorylation on Ser-2054 regulates phospholipid efflux. In terms of processing, palmitoylated by ZDHHC8. Palmitoylation is essential for localization to the plasma membrane. Widely expressed, but most abundant in macrophages.

The protein localises to the cell membrane. Its subcellular location is the endosome. It carries out the reaction ATP + H2O + phospholipidSide 1 = ADP + phosphate + phospholipidSide 2.. It catalyses the reaction a 1,2-diacyl-sn-glycero-3-phosphocholine(out) + ATP + H2O = a 1,2-diacyl-sn-glycero-3-phosphocholine(in) + ADP + phosphate + H(+). The enzyme catalyses a 1,2-diacyl-sn-glycero-3-phospho-L-serine(out) + ATP + H2O = a 1,2-diacyl-sn-glycero-3-phospho-L-serine(in) + ADP + phosphate + H(+). The catalysed reaction is a sphingomyelin(in) + ATP + H2O = a sphingomyelin(out) + ADP + phosphate + H(+). It carries out the reaction cholesterol(in) + ATP + H2O = cholesterol(out) + ADP + phosphate + H(+). With respect to regulation, ATPase activity is decreased by cholesterol and ceramide. ATPase activity is stimulated by phosphatidylcholine and to a lesser degree by phosphatidylserine and sphingomyelin. Phospholipid translocase activity is highly reduced by berylium fluoride and aluminum flouride and reduced by N-ethylmaleimide. Catalyzes the translocation of specific phospholipids from the cytoplasmic to the extracellular/lumenal leaflet of membrane coupled to the hydrolysis of ATP. Thereby, participates in phospholipid transfer to apolipoproteins to form nascent high density lipoproteins/HDLs. Transports preferentially phosphatidylcholine over phosphatidylserine. May play a similar role in the efflux of intracellular cholesterol to apolipoproteins and the formation of nascent high density lipoproteins/HDLs. Translocates phospholipids from the outer face of the plasma membrane and forces it through its gateway and annulus into an elongated hydrophobic tunnel in its extracellular domain. The chain is Phospholipid-transporting ATPase ABCA1 from Homo sapiens (Human).